A 66-amino-acid polypeptide reads, in one-letter code: DNA-directed RNA polymerase subunit Rpo10 (66 aa).

Residues C7, C10, C44, and C45 each coordinate Zn(2+).

This sequence belongs to the archaeal Rpo10/eukaryotic RPB10 RNA polymerase subunit family. Part of the RNA polymerase complex. Zn(2+) is required as a cofactor.

It localises to the cytoplasm. It catalyses the reaction RNA(n) + a ribonucleoside 5'-triphosphate = RNA(n+1) + diphosphate. In terms of biological role, DNA-dependent RNA polymerase (RNAP) catalyzes the transcription of DNA into RNA using the four ribonucleoside triphosphates as substrates. This chain is DNA-directed RNA polymerase subunit Rpo10, found in Pyrobaculum aerophilum (strain ATCC 51768 / DSM 7523 / JCM 9630 / CIP 104966 / NBRC 100827 / IM2).